Here is an 86-residue protein sequence, read N- to C-terminus: Large ribosomal subunit protein bL31B (86 aa).

It belongs to the bacterial ribosomal protein bL31 family. Type B subfamily. Part of the 50S ribosomal subunit.

This Yersinia enterocolitica serotype O:8 / biotype 1B (strain NCTC 13174 / 8081) protein is Large ribosomal subunit protein bL31B.